The chain runs to 100 residues: uncharacterized protein (100 aa).

A disordered region spans residues 78–100; that stretch reads NNGNLDFKGRADERRQPVSNLRM. The segment covering 84–93 has biased composition (basic and acidic residues); it reads FKGRADERRQ.

This is an uncharacterized protein from Saccharomyces cerevisiae (strain ATCC 204508 / S288c) (Baker's yeast).